The primary structure comprises 138 residues: Ribulose bisphosphate carboxylase small subunit (138 aa).

It belongs to the RuBisCO small chain family. Heterohexadecamer of 8 large and 8 small subunits.

It is found in the plastid. The protein resides in the chloroplast. Functionally, ruBisCO catalyzes two reactions: the carboxylation of D-ribulose 1,5-bisphosphate, the primary event in carbon dioxide fixation, as well as the oxidative fragmentation of the pentose substrate in the photorespiration process. Both reactions occur simultaneously and in competition at the same active site. Although the small subunit is not catalytic it is essential for maximal activity. This is Ribulose bisphosphate carboxylase small subunit from Porphyra purpurea (Red seaweed).